The primary structure comprises 235 residues: Purine nucleoside phosphorylase DeoD-type (235 aa).

His4 contacts a purine D-ribonucleoside. Residues Gly20, Arg24, Arg43, and Arg87–Thr90 contribute to the phosphate site. A purine D-ribonucleoside-binding positions include Glu162, Glu179–Glu181, and Ser203–Asp204. The active-site Proton donor is Asp204.

The protein belongs to the PNP/UDP phosphorylase family. In terms of assembly, homohexamer; trimer of homodimers.

It carries out the reaction a purine D-ribonucleoside + phosphate = a purine nucleobase + alpha-D-ribose 1-phosphate. It catalyses the reaction a purine 2'-deoxy-D-ribonucleoside + phosphate = a purine nucleobase + 2-deoxy-alpha-D-ribose 1-phosphate. Functionally, catalyzes the reversible phosphorolytic breakdown of the N-glycosidic bond in the beta-(deoxy)ribonucleoside molecules, with the formation of the corresponding free purine bases and pentose-1-phosphate. This chain is Purine nucleoside phosphorylase DeoD-type, found in Bacillus cytotoxicus (strain DSM 22905 / CIP 110041 / 391-98 / NVH 391-98).